The chain runs to 435 residues: Methylenetetrahydrofolate--tRNA-(uracil-5-)-methyltransferase TrmFO (435 aa).

Residue 9-14 (GGGLAG) participates in FAD binding.

This sequence belongs to the MnmG family. TrmFO subfamily. FAD is required as a cofactor.

Its subcellular location is the cytoplasm. The enzyme catalyses uridine(54) in tRNA + (6R)-5,10-methylene-5,6,7,8-tetrahydrofolate + NADH + H(+) = 5-methyluridine(54) in tRNA + (6S)-5,6,7,8-tetrahydrofolate + NAD(+). It catalyses the reaction uridine(54) in tRNA + (6R)-5,10-methylene-5,6,7,8-tetrahydrofolate + NADPH + H(+) = 5-methyluridine(54) in tRNA + (6S)-5,6,7,8-tetrahydrofolate + NADP(+). Catalyzes the folate-dependent formation of 5-methyl-uridine at position 54 (M-5-U54) in all tRNAs. This is Methylenetetrahydrofolate--tRNA-(uracil-5-)-methyltransferase TrmFO from Citrifermentans bemidjiense (strain ATCC BAA-1014 / DSM 16622 / JCM 12645 / Bem) (Geobacter bemidjiensis).